The following is a 944-amino-acid chain: Protocadherin gamma-C5 (944 aa).

Positions 1-29 (MGPKTLPQLAGKWQVLCMLSLCCWGWVSG) are cleaved as a signal peptide. 6 Cadherin domains span residues 30-133 (QLRY…SPSF), 134-242 (ATPE…APTF), 243-350 (QSSV…APEV), 351-454 (LLAS…APRF), 455-564 (NQQL…APAV), and 571-677 (WEHS…MPKS). The Extracellular portion of the chain corresponds to 30-693 (QLRYSVVEES…PPERSDLTLY (664 aa)). N-linked (GlcNAc...) asparagine glycans are attached at residues Asn-265, Asn-443, and Asn-547. A helical membrane pass occupies residues 694-714 (LIVALATVSLLSLVTFTFLSA). The Cytoplasmic portion of the chain corresponds to 715–944 (KCLQGNADGD…KKKSGKKEKK (230 aa)). 3 disordered regions span residues 722 to 747 (DGDG…QSSP), 812 to 853 (SNTL…WPNN), and 914 to 944 (ATLT…KEKK). Residues 820 to 853 (QQAPPNTDWRFSQAQRPGTSGSQNGDDTGTWPNN) are compositionally biased toward polar residues. Basic residues predominate over residues 934-944 (NKKKSGKKEKK).

The protein resides in the cell membrane. In terms of biological role, potential calcium-dependent cell-adhesion protein. May be involved in the establishment and maintenance of specific neuronal connections in the brain. This is Protocadherin gamma-C5 (PCDHGC5) from Homo sapiens (Human).